A 405-amino-acid chain; its full sequence is CRS2-associated factor 1, mitochondrial (405 aa).

A mitochondrion-targeting transit peptide spans 1–20 (MFLIRLSRHNPSSFTLLTRR). Positions 32 to 75 (RDLYNFQSPPPLSSSASENPDFNQKNNNKKKPKPQYRPPSSLEG) are disordered. 2 consecutive CRM domains span residues 157-255 (ASLT…KRPK) and 277-373 (DGLS…KEDD). The segment at 384 to 405 (SIDSDVDLSCSRGAQDSPDETT) is disordered.

As to quaternary structure, part of large ribonucleo-protein complexes that include group IIB introns.

It localises to the mitochondrion. In terms of biological role, may be involved in the splicing of group IIB introns in mitochondria. This chain is CRS2-associated factor 1, mitochondrial, found in Arabidopsis thaliana (Mouse-ear cress).